A 523-amino-acid chain; its full sequence is Cytoplasmic dynein 1 light intermediate chain 1 (523 aa).

The interval 1–25 is disordered; that stretch reads MAAVGRVGSFGSSPPGLSSTYTGGP. The span at 9–19 shows a compositional bias: low complexity; sequence SFGSSPPGLSS. 74 to 81 lines the ATP pocket; the sequence is GEDGAGKT. Position 207 is a phosphoserine (Ser207). Thr213 bears the Phosphothreonine mark. Disordered regions lie at residues 387–434 and 456–523; these read PPTA…DPNM and TGSP…GEAS. Residues Ser398 and Ser405 each carry the phosphoserine modification. Thr408 carries the post-translational modification Phosphothreonine. 4 positions are modified to phosphoserine: Ser412, Ser419, Ser421, and Ser427. Low complexity predominate over residues 412–421; it reads SVSSNVASVS. Residues 458–478 are compositionally biased toward gly residues; sequence SPGGPGVSGGSPAGGAGGGSS. Ser487 is subject to Phosphoserine. Basic and acidic residues predominate over residues 493-503; that stretch reads LDVHAELDRIT. Low complexity predominate over residues 506–523; it reads PVTVSPTTPTSPTEGEAS. A Phosphoserine modification is found at Ser510. A phosphothreonine mark is found at Thr512, Thr513, and Thr515. Ser516 carries the post-translational modification Phosphoserine.

This sequence belongs to the dynein light intermediate chain family. As to quaternary structure, homodimer. The cytoplasmic dynein 1 complex consists of two catalytic heavy chains (HCs) and a number of non-catalytic subunits presented by intermediate chains (ICs), light intermediate chains (LICs) and light chains (LCs); the composition seems to vary in respect to the IC, LIC and LC composition. The heavy chain homodimer serves as a scaffold for the probable homodimeric assembly of the respective non-catalytic subunits. The ICs and LICs bind directly to the HC dimer and the LCs assemble on the IC dimer. Self-associates. Interacts with DYNC1H1; DYNC1LI1 and DYNC1LI2 bind mutually exclusive to DYNC1H1. Interacts with PCNT. Forms a complex with RAB11FIP3 and RAB11A1; the interaction between DYNC1LI1 and RAB11FIP3 is direct and induces DYNC1LI1 localization onto endosomal membrane; the complex regulates endocytic trafficking. Interacts with RUFY3. In terms of assembly, (Microbial infection) Interacts with human adenovirus 5 hexon protein; this interaction probably allows virus intracellular transport. Phosphorylated during mitosis but not in interphase.

The protein localises to the cytoplasm. It localises to the chromosome. It is found in the centromere. Its subcellular location is the kinetochore. The protein resides in the cytoskeleton. The protein localises to the spindle pole. It localises to the recycling endosome membrane. In terms of biological role, acts as one of several non-catalytic accessory components of the cytoplasmic dynein 1 complex that are thought to be involved in linking dynein to cargos and to adapter proteins that regulate dynein function. Cytoplasmic dynein 1 acts as a motor for the intracellular retrograde motility of vesicles and organelles along microtubules. May play a role in binding dynein to membranous organelles or chromosomes. Probably involved in the microtubule-dependent transport of pericentrin. Is required for progress through the spindle assembly checkpoint. The phosphorylated form appears to be involved in the selective removal of MAD1L1 and MAD1L2 but not BUB1B from kinetochores. Forms a functional Rab11/RAB11FIP3/dynein complex onto endosomal membrane that regulates the movement of peripheral sorting endosomes (SE) along microtubule tracks toward the microtubule organizing center/centrosome, generating the endosomal recycling compartment (ERC). The sequence is that of Cytoplasmic dynein 1 light intermediate chain 1 (DYNC1LI1) from Homo sapiens (Human).